The following is a 518-amino-acid chain: Nitrogenase iron-iron protein alpha chain (518 aa).

[8Fe-7S] cluster is bound by residues cysteine 49, cysteine 75, and cysteine 138. Positions 257 and 423 each coordinate [8Fe-9S-C-homocitryl] cluster.

Belongs to the NifD/NifK/NifE/NifN family. In terms of assembly, hexamer of two alpha, two beta, and two delta chains. The cofactor is [8Fe-7S] cluster. [8Fe-9S-C-homocitryl] cluster serves as cofactor.

It catalyses the reaction N2 + 8 reduced [2Fe-2S]-[ferredoxin] + 16 ATP + 16 H2O = H2 + 8 oxidized [2Fe-2S]-[ferredoxin] + 2 NH4(+) + 16 ADP + 16 phosphate + 6 H(+). This iron-iron protein is part of the nitrogenase complex that catalyzes the key enzymatic reactions in nitrogen fixation. Other nitrogenase complexes utilize a molybdenum-iron protein or a vanadium-iron protein. The polypeptide is Nitrogenase iron-iron protein alpha chain (anfD) (Azotobacter vinelandii).